The primary structure comprises 1274 residues: ABC multidrug transporter E (1274 aa).

Asn-48 carries N-linked (GlcNAc...) asparagine glycosylation. In terms of domain architecture, ABC transmembrane type-1 1 spans 120–344 (FCFRVTGLRV…IASPLIIVSK (225 aa)). The next 4 membrane-spanning stretches (helical) occupy residues 183 to 203 (LALL…LTLV), 205 to 225 (SSAL…MTKI), 280 to 300 (IFGI…SLAF), and 321 to 341 (VFFS…PLII). In terms of domain architecture, ABC transporter 1 spans 377-629 (IIFRDVRFTY…EGGVYRDLVN (253 aa)). An ATP-binding site is contributed by 412–419 (GPSGSGKS). Residues Asn-473 and Asn-580 are each glycosylated (N-linked (GlcNAc...) asparagine). The next 2 membrane-spanning stretches (helical) occupy residues 697 to 717 (VAVL…SWLF) and 737 to 757 (FWAL…STVG). The region spanning 697–984 (VAVLISTAGA…FFSFASNFAQ (288 aa)) is the ABC transmembrane type-1 2 domain. Asn-792 carries N-linked (GlcNAc...) asparagine glycosylation. Helical transmembrane passes span 818–838 (FPLI…SFGW), 840–860 (LSLV…FMRI), and 924–944 (LIFA…FWYG). Residues 1023–1269 (VEFHDVSFRY…KGTYWQMVSS (247 aa)) form the ABC transporter 2 domain. Asn-1044 is a glycosylation site (N-linked (GlcNAc...) asparagine). 1057 to 1064 (GPSGCGKT) lines the ATP pocket. N-linked (GlcNAc...) asparagine glycosylation is present at Asn-1117.

This sequence belongs to the ABC transporter superfamily. ABCB family. Multidrug resistance exporter (TC 3.A.1.201) subfamily.

The protein resides in the cell membrane. Functionally, pleiotropic ABC efflux transporter that may be involved in A.fumigatus adaptation to azoles such as vorizonazole. This chain is ABC multidrug transporter E, found in Aspergillus fumigatus (strain ATCC MYA-4609 / CBS 101355 / FGSC A1100 / Af293) (Neosartorya fumigata).